The chain runs to 159 residues: Membrane protein FAM174B (159 aa).

A signal peptide spans 1–27 (MRAALPPARLLPLLLLLALLGAPAARA). Residues 28–73 (SRAQSAAPPQPGAERQPRPPPGPGPGNATGTGSGEAAGGGGSSNSS) form a disordered region. Residues 28–90 (SRAQSAAPPQ…ISSLLRDLHT (63 aa)) lie on the Extracellular side of the membrane. The span at 52–69 (PGNATGTGSGEAAGGGGS) shows a compositional bias: gly residues. N-linked (GlcNAc...) asparagine glycosylation is present at N54. Residues 91–111 (LKAAVIVACAFTAFLIACLLL) traverse the membrane as a helical segment. The Cytoplasmic portion of the chain corresponds to 112 to 159 (RVFRSGKRLKKTRKYDIITTPAERVEMAPLNEEDDEDEDSTVFDIKYR).

It belongs to the FAM174 family.

It is found in the cell membrane. The protein resides in the golgi apparatus. Essential for Golgi structural integrity. The sequence is that of Membrane protein FAM174B (FAM174B) from Bos taurus (Bovine).